A 133-amino-acid polypeptide reads, in one-letter code: UPF0102 protein CYA_0680 (133 aa).

Belongs to the UPF0102 family.

The polypeptide is UPF0102 protein CYA_0680 (Synechococcus sp. (strain JA-3-3Ab) (Cyanobacteria bacterium Yellowstone A-Prime)).